Reading from the N-terminus, the 416-residue chain is Putative competence-damage inducible protein (416 aa).

The protein belongs to the CinA family.

The sequence is that of Putative competence-damage inducible protein from Levilactobacillus brevis (strain ATCC 367 / BCRC 12310 / CIP 105137 / JCM 1170 / LMG 11437 / NCIMB 947 / NCTC 947) (Lactobacillus brevis).